We begin with the raw amino-acid sequence, 165 residues long: Pro-MCH (165 aa).

The signal sequence occupies residues 1-21 (MAKMSLSSYLLILTFSLFSQG). The interval 68–88 (NDDSSFMNDEENKNSKNTGSK) is disordered. I143 is subject to Isoleucine amide. Cysteines 153 and 162 form a disulfide.

This sequence belongs to the melanin-concentrating hormone family. In terms of processing, pro-MCH is processed differentially in the brain and in peripheral organs producing two neuropeptides; NEI and MCH. A third peptide, NGE, may also be produced. Preferential processing in neurons by prohormone convertase 2 (PC2) generates NEI. MCH is generated in neurons of the lateral hypothalmic area by several prohormone convertases including PC1/3, PC2 and PC5/6.

The protein localises to the secreted. In terms of biological role, MCH may act as a neurotransmitter or neuromodulator in a broad array of neuronal functions directed toward the regulation of goal-directed behavior, such as food intake, and general arousal. The chain is Pro-MCH (PMCH) from Canis lupus familiaris (Dog).